The chain runs to 113 residues: UPF0482 protein KPN78578_15540 (113 aa).

Positions 1-28 are cleaved as a signal peptide; sequence MNMTLNKRWCLTAILALSAVVYTSSSYA. The segment at 38-60 is disordered; it reads GDSAQSRQQASMEKEQWNDTRSL. Polar residues predominate over residues 39–48; that stretch reads DSAQSRQQAS. The span at 49–59 shows a compositional bias: basic and acidic residues; that stretch reads MEKEQWNDTRS.

The protein belongs to the UPF0482 family.

The sequence is that of UPF0482 protein KPN78578_15540 from Klebsiella pneumoniae subsp. pneumoniae (strain ATCC 700721 / MGH 78578).